A 173-amino-acid polypeptide reads, in one-letter code: Crossover junction endodeoxyribonuclease RuvC (173 aa).

Active-site residues include Asp8, Glu67, and Asp139. Asp8, Glu67, and Asp139 together coordinate Mg(2+).

This sequence belongs to the RuvC family. Homodimer which binds Holliday junction (HJ) DNA. The HJ becomes 2-fold symmetrical on binding to RuvC with unstacked arms; it has a different conformation from HJ DNA in complex with RuvA. In the full resolvosome a probable DNA-RuvA(4)-RuvB(12)-RuvC(2) complex forms which resolves the HJ. Requires Mg(2+) as cofactor.

It localises to the cytoplasm. The catalysed reaction is Endonucleolytic cleavage at a junction such as a reciprocal single-stranded crossover between two homologous DNA duplexes (Holliday junction).. Functionally, the RuvA-RuvB-RuvC complex processes Holliday junction (HJ) DNA during genetic recombination and DNA repair. Endonuclease that resolves HJ intermediates. Cleaves cruciform DNA by making single-stranded nicks across the HJ at symmetrical positions within the homologous arms, yielding a 5'-phosphate and a 3'-hydroxyl group; requires a central core of homology in the junction. The consensus cleavage sequence is 5'-(A/T)TT(C/G)-3'. Cleavage occurs on the 3'-side of the TT dinucleotide at the point of strand exchange. HJ branch migration catalyzed by RuvA-RuvB allows RuvC to scan DNA until it finds its consensus sequence, where it cleaves and resolves the cruciform DNA. Plays a role in recovery after DNA ADP-ribosylation, probably via replication fork reversal. The protein is Crossover junction endodeoxyribonuclease RuvC of Escherichia coli O127:H6 (strain E2348/69 / EPEC).